Reading from the N-terminus, the 301-residue chain is ATP synthase subunit gamma, mitochondrial (301 aa).

This sequence belongs to the ATPase gamma chain family. In terms of assembly, F-type ATPases have 2 components, CF(1) - the catalytic core - and CF(0) - the membrane proton channel. CF(1) has five subunits: alpha(3), beta(3), gamma(1), delta(1), epsilon(1). CF(0) has three main subunits: a, b and c.

It is found in the mitochondrion. The protein localises to the mitochondrion inner membrane. Functionally, mitochondrial membrane ATP synthase (F(1)F(0) ATP synthase or Complex V) produces ATP from ADP in the presence of a proton gradient across the membrane which is generated by electron transport complexes of the respiratory chain. F-type ATPases consist of two structural domains, F(1) - containing the extramembraneous catalytic core, and F(0) - containing the membrane proton channel, linked together by a central stalk and a peripheral stalk. During catalysis, ATP synthesis in the catalytic domain of F(1) is coupled via a rotary mechanism of the central stalk subunits to proton translocation. Part of the complex F(1) domain and the central stalk which is part of the complex rotary element. The gamma subunit protrudes into the catalytic domain formed of alpha(3)beta(3). Rotation of the central stalk against the surrounding alpha(3)beta(3) subunits leads to hydrolysis of ATP in three separate catalytic sites on the beta subunits. The protein is ATP synthase subunit gamma, mitochondrial (atp3) of Schizosaccharomyces pombe (strain 972 / ATCC 24843) (Fission yeast).